We begin with the raw amino-acid sequence, 298 residues long: Proline iminopeptidase (298 aa).

The region spanning 26–277 is the AB hydrolase-1 domain; sequence VLLLHGGPAM…NGSHLAMWDD (252 aa). The active-site Nucleophile is the Ser103. Asp244 is an active-site residue. His271 acts as the Proton donor in catalysis.

The protein belongs to the peptidase S33 family. Monomer.

The enzyme catalyses Release of N-terminal proline from a peptide.. Releases the N-terminal proline from various substrates. Cleaves specifically Pro-betaNA and small peptides containing proline at the amino terminal. No activity against hydroxyproline-betaNA. The polypeptide is Proline iminopeptidase (fpaP) (Elizabethkingia meningoseptica (Chryseobacterium meningosepticum)).